Reading from the N-terminus, the 30-residue chain is ACYCRIPACFAGERRYGTCFYLGRVWAFCC.

3 cysteine pairs are disulfide-bonded: cysteine 2–cysteine 30, cysteine 4–cysteine 19, and cysteine 9–cysteine 29.

Its subcellular location is the secreted. Its function is as follows. In low salt conditions, has antibacterial activity against the Gram-negative bacterium E.coli ML35p (MIC=2.4 uM), the Gram-positive bacteria L.monocytogenes EGD (MIC=2.2 uM) and methicillin-resistant S.aureus ATCC 33591 (MIC=3.5 uM), and the fungus C.albicans 820 (MIC=3.9 uM). At high physiological salt concentrations the antimicrobial activity decreases significantly: E.coli ML35p (MIC=7.1 uM), L.monocytogenes EGD (MIC=1.8 uM), S.aureus ATCC 33591 (MIC=&gt;50 uM), and C.albicans 820 (MIC=&gt;50 uM). The sequence is that of Alpha-defensin PhD-4 from Papio hamadryas (Hamadryas baboon).